The following is an 844-amino-acid chain: SWI/SNF-related matrix-associated actin-dependent regulator of chromatin subfamily A containing DEAD/H box 1 homolog (844 aa).

Over residues 1–23 the composition is skewed to low complexity; the sequence is MSDSTVAASASASASSSAKSSLS. 2 disordered regions span residues 1-75 and 121-180; these read MSDS…TKLE and NCKP…STKM. The span at 30 to 42 shows a compositional bias: polar residues; the sequence is INKNASSVVASPS. The Helicase ATP-binding domain occupies 301 to 471; sequence TVMHKQEMNG…ISLLCFVMPK (171 aa). Residue 314-321 participates in ATP binding; that stretch reads DEMGLGKT. A DEGH box motif is present at residues 422–425; the sequence is DEAH. Residues 656-818 enclose the Helicase C-terminal domain; sequence YLDTLLPKLK…EQRCVVKLLT (163 aa). A phosphoserine mark is found at serine 834, serine 838, and serine 841.

The protein belongs to the SNF2/RAD54 helicase family.

It localises to the nucleus. The enzyme catalyses ATP + H2O = ADP + phosphate + H(+). DNA helicase that possesses intrinsic ATP-dependent nucleosome-remodeling activity and is both required for DNA repair and heterochromatin organization. Promotes DNA end resection of double-strand breaks (DSBs) following DNA damage: probably acts by weakening histone DNA interactions in nucleosomes flanking DSBs. The polypeptide is SWI/SNF-related matrix-associated actin-dependent regulator of chromatin subfamily A containing DEAD/H box 1 homolog (Etl1) (Drosophila melanogaster (Fruit fly)).